The primary structure comprises 399 residues: MTRFQRVAVLGSTGSIGDSTLDVIARHPDRLGVYALSAYSRMDKLAAQAAACGAAVVVVPDDAAAARFRAAWRGKAAMPEVRVGPRALAETAAAPECTTVMAAIVGAAGLPAALAAAQAGKRVLLANKEALVAAGSLFMAAVRENGAELLPIDSEHNAIFQCMPQGARAAAPTAPAPGVRRLLLTASGGPFRRQDPADLHEVTPAQACAHPNWSMGRKISVDSATMLNKGLEVIEAHWLFAMPSERIDVLIHPQSVVHSMVEYDDGSVLAQLGQPDMRTPIAYGLGFPERLASGVGLLDLTRWGRLDFEQPDLQRFPCLALSFAALRAGQPACVALNAANEVAVAAFLEGRLRYTWIARVIEAVLEWQAKQASVTLTSLDDVLDLDARARSFAGNLGLA.

Residues T13, G14, S15, I16, and N127 each contribute to the NADPH site. K128 provides a ligand contact to 1-deoxy-D-xylulose 5-phosphate. Residue E129 coordinates NADPH. D153 contacts Mn(2+). S154, E155, S187, and H210 together coordinate 1-deoxy-D-xylulose 5-phosphate. E155 lines the Mn(2+) pocket. G216 contributes to the NADPH binding site. The 1-deoxy-D-xylulose 5-phosphate site is built by S223, N228, K229, and E232. E232 serves as a coordination point for Mn(2+).

It belongs to the DXR family. Mg(2+) is required as a cofactor. Requires Mn(2+) as cofactor.

The enzyme catalyses 2-C-methyl-D-erythritol 4-phosphate + NADP(+) = 1-deoxy-D-xylulose 5-phosphate + NADPH + H(+). It participates in isoprenoid biosynthesis; isopentenyl diphosphate biosynthesis via DXP pathway; isopentenyl diphosphate from 1-deoxy-D-xylulose 5-phosphate: step 1/6. Functionally, catalyzes the NADPH-dependent rearrangement and reduction of 1-deoxy-D-xylulose-5-phosphate (DXP) to 2-C-methyl-D-erythritol 4-phosphate (MEP). The protein is 1-deoxy-D-xylulose 5-phosphate reductoisomerase of Bordetella pertussis (strain Tohama I / ATCC BAA-589 / NCTC 13251).